Reading from the N-terminus, the 84-residue chain is Toxin CsE9 (84 aa).

The first 19 residues, Met-1 to Ala-19, serve as a signal peptide directing secretion. Residues Glu-20–Lys-83 form the LCN-type CS-alpha/beta domain. 4 cysteine pairs are disulfide-bonded: Cys-31-Cys-82, Cys-35-Cys-58, Cys-44-Cys-63, and Cys-48-Cys-65.

This sequence belongs to the long (4 C-C) scorpion toxin superfamily. Sodium channel inhibitor family. Beta subfamily. Expressed by the venom gland.

It localises to the secreted. Beta toxins bind voltage-independently at site-4 of sodium channels (Nav) and shift the voltage of activation toward more negative potentials thereby affecting sodium channel activation and promoting spontaneous and repetitive firing. This Centruroides sculpturatus (Arizona bark scorpion) protein is Toxin CsE9.